Here is a 451-residue protein sequence, read N- to C-terminus: D-inositol 3-phosphate glycosyltransferase (451 aa).

A 1D-myo-inositol 3-phosphate-binding site is contributed by histidine 21. UDP-N-acetyl-alpha-D-glucosamine contacts are provided by residues glutamine 27–proline 28 and glycine 35. 1D-myo-inositol 3-phosphate contacts are provided by residues aspartate 32–asparagine 37, lysine 90, tyrosine 123, threonine 147, and arginine 167. UDP-N-acetyl-alpha-D-glucosamine is bound by residues arginine 241, lysine 246, and glutamine 305. Residues tyrosine 314, arginine 315, and alanine 317 each contribute to the Mg(2+) site. Positions 327 and 335 each coordinate UDP-N-acetyl-alpha-D-glucosamine. Position 341 (threonine 341) interacts with Mg(2+).

The protein belongs to the glycosyltransferase group 1 family. MshA subfamily. In terms of assembly, homodimer.

The enzyme catalyses 1D-myo-inositol 3-phosphate + UDP-N-acetyl-alpha-D-glucosamine = 1D-myo-inositol 2-acetamido-2-deoxy-alpha-D-glucopyranoside 3-phosphate + UDP + H(+). Catalyzes the transfer of a N-acetyl-glucosamine moiety to 1D-myo-inositol 3-phosphate to produce 1D-myo-inositol 2-acetamido-2-deoxy-glucopyranoside 3-phosphate in the mycothiol biosynthesis pathway. This chain is D-inositol 3-phosphate glycosyltransferase, found in Nocardia farcinica (strain IFM 10152).